A 341-amino-acid polypeptide reads, in one-letter code: Methionine import ATP-binding protein MetN 3 (341 aa).

An ABC transporter domain is found at Ile2–Val241. Residue Gly38–Ser45 participates in ATP binding.

The protein belongs to the ABC transporter superfamily. Methionine importer (TC 3.A.1.24) family. As to quaternary structure, the complex is composed of two ATP-binding proteins (MetN), two transmembrane proteins (MetI) and a solute-binding protein (MetQ).

It is found in the cell membrane. It carries out the reaction L-methionine(out) + ATP + H2O = L-methionine(in) + ADP + phosphate + H(+). It catalyses the reaction D-methionine(out) + ATP + H2O = D-methionine(in) + ADP + phosphate + H(+). Its function is as follows. Part of the ABC transporter complex MetNIQ involved in methionine import. Responsible for energy coupling to the transport system. This Bacillus cereus (strain ATCC 14579 / DSM 31 / CCUG 7414 / JCM 2152 / NBRC 15305 / NCIMB 9373 / NCTC 2599 / NRRL B-3711) protein is Methionine import ATP-binding protein MetN 3.